We begin with the raw amino-acid sequence, 159 residues long: Endoribonuclease YbeY (159 aa).

Residues histidine 125, histidine 129, and histidine 135 each contribute to the Zn(2+) site.

It belongs to the endoribonuclease YbeY family. Requires Zn(2+) as cofactor.

Its subcellular location is the cytoplasm. Single strand-specific metallo-endoribonuclease involved in late-stage 70S ribosome quality control and in maturation of the 3' terminus of the 16S rRNA. This Limosilactobacillus reuteri (strain DSM 20016) (Lactobacillus reuteri) protein is Endoribonuclease YbeY.